The chain runs to 153 residues: 3-hydroxyacyl-[acyl-carrier-protein] dehydratase FabZ (153 aa).

His57 is an active-site residue.

This sequence belongs to the thioester dehydratase family. FabZ subfamily.

It localises to the cytoplasm. It catalyses the reaction a (3R)-hydroxyacyl-[ACP] = a (2E)-enoyl-[ACP] + H2O. In terms of biological role, involved in unsaturated fatty acids biosynthesis. Catalyzes the dehydration of short chain beta-hydroxyacyl-ACPs and long chain saturated and unsaturated beta-hydroxyacyl-ACPs. This is 3-hydroxyacyl-[acyl-carrier-protein] dehydratase FabZ from Xanthomonas campestris pv. campestris (strain 8004).